A 145-amino-acid chain; its full sequence is Transcription antitermination protein NusB (145 aa).

This sequence belongs to the NusB family.

Functionally, involved in transcription antitermination. Required for transcription of ribosomal RNA (rRNA) genes. Binds specifically to the boxA antiterminator sequence of the ribosomal RNA (rrn) operons. In Paraburkholderia phymatum (strain DSM 17167 / CIP 108236 / LMG 21445 / STM815) (Burkholderia phymatum), this protein is Transcription antitermination protein NusB.